The primary structure comprises 503 residues: MFGDRQRPMVLVLGLGESGLAIARWCARHGCRLRIADTREAPPNLAALRAEGIDAEFVGGPFGPALLDGGVEIVGLSPGLSPLEPALATLLAAANERGVAVWGELEFFAQALRALGTSGYQPKVLAITGTNGKTTTTSLTGLLCQRAGKKVAVAGNISPAMLDRLAAAIDDTALPDVWVLELSSFQLETARTFAPDAAAILNITQDHLDWHGSFDAYAAAKGRIFGATTTRVLNRDDPVVMKFAPAAGAADAPRTITFGLNEPTQDGDYGLSRDNGIAWLVEAIDRDAPDETAPTTRRRKRDAHTPDIAHKRLMPADALRIRGLHNAANALAAFALARAIDLPAAPLLHALREYRGEAHRVEVIATIDDVDYVDDSKGTNVGATVAALDGLAQKTVLIAGGDGKGQDFAPLVAPVARWCRAVMLIGRDAPAIRDTLAETGVPLVEHPTLEAAVHAAAALAEPGDAVLLSPACASLDMFRNYAHRADVFRAAVDELAIDKGATP.

129–135 (GTNGKTT) is a binding site for ATP.

It belongs to the MurCDEF family.

The protein localises to the cytoplasm. It catalyses the reaction UDP-N-acetyl-alpha-D-muramoyl-L-alanine + D-glutamate + ATP = UDP-N-acetyl-alpha-D-muramoyl-L-alanyl-D-glutamate + ADP + phosphate + H(+). Its pathway is cell wall biogenesis; peptidoglycan biosynthesis. Cell wall formation. Catalyzes the addition of glutamate to the nucleotide precursor UDP-N-acetylmuramoyl-L-alanine (UMA). The chain is UDP-N-acetylmuramoylalanine--D-glutamate ligase from Burkholderia multivorans (strain ATCC 17616 / 249).